The sequence spans 475 residues: MSVQEYLDKHMLSRKIEDAVNAAVRAKTSDPVLFIANHLKKAVSSVITKVKARQILDSRGIPTVEVDLHTNKGVFRASVPSGDSSGTYEAIELRDGDKGMYLGNSVAKAVKNINEKISEALIGMDPKLQGQIDQAMIDLDKTEKKSELGANAILAVSIAACKAGAAEKEVPLCKHLSDLSGRANMVLPVPAFTVLSGGKHASNTFAIQEIMILPIGASRFEEALQWGSETYHHLKAVISEKNGGLGCNVGEDGGLAPDISSLKEGLELVKEAINRTGYNDKIKIAIDIAATNFCLGTKYDLDIKSPNKSGQNFKSAEDMIDMYKEICNDYPIVSIEDPFDKEDWEHTKYFSSLGICQVVGDDLLMSNSKRVERAIQESSCNALLLKVNQIGTVTEAIEVVKMARDAQWGVVTSHRCGETEDSFISDLSVGLATGVIKAGAPCRGERTMKYNQLLRIEEELGDQAVYAGEDWKLSL.

Ser2 carries the N-acetylserine modification. Positions 200 and 209 each coordinate substrate. Residue Asp252 is the Proton donor of the active site. Residues Asp287, Glu336, and Asp361 each contribute to the Mg(2+) site. Residues Glu336 and Asp361 each contribute to the substrate site. Lys386 serves as the catalytic Proton acceptor. Residues 413–416 (SHRC) and Lys437 each bind substrate.

The protein belongs to the enolase family. Homodimer. Requires Mg(2+) as cofactor.

It localises to the cytoplasm. The protein resides in the nucleus. The enzyme catalyses (2R)-2-phosphoglycerate = phosphoenolpyruvate + H2O. It participates in carbohydrate degradation; glycolysis; pyruvate from D-glyceraldehyde 3-phosphate: step 4/5. This is Cytosolic enolase 3 (ENO3) from Arabidopsis thaliana (Mouse-ear cress).